Reading from the N-terminus, the 233-residue chain is MSVLTSIRKSLVPIHREGYPFIAIAVVIAIGLLSVSTFFGMLAVGLAIWTALFFRDPQRVTPLREGLVVAPADGRISQIGLALPPRELGLSEVPLLRISIFMNVFNVHVNRAPVTGRIEKIAYKPGLFLNAELDKASEDNERNGLIIHGPNGVVGVVQIAGLIARRIVSFVHEGETIGAGERFGLIRFGSRVDVYLPVGTRVLVSEGQLTVAGETILADYDAAPTRDIAFRVS.

Ser190 acts as the Schiff-base intermediate with substrate; via pyruvic acid in catalysis. Position 190 is a pyruvic acid (Ser); by autocatalysis (Ser190).

The protein belongs to the phosphatidylserine decarboxylase family. PSD-A subfamily. Heterodimer of a large membrane-associated beta subunit and a small pyruvoyl-containing alpha subunit. Requires pyruvate as cofactor. Is synthesized initially as an inactive proenzyme. Formation of the active enzyme involves a self-maturation process in which the active site pyruvoyl group is generated from an internal serine residue via an autocatalytic post-translational modification. Two non-identical subunits are generated from the proenzyme in this reaction, and the pyruvate is formed at the N-terminus of the alpha chain, which is derived from the carboxyl end of the proenzyme. The post-translation cleavage follows an unusual pathway, termed non-hydrolytic serinolysis, in which the side chain hydroxyl group of the serine supplies its oxygen atom to form the C-terminus of the beta chain, while the remainder of the serine residue undergoes an oxidative deamination to produce ammonia and the pyruvoyl prosthetic group on the alpha chain.

Its subcellular location is the cell membrane. It carries out the reaction a 1,2-diacyl-sn-glycero-3-phospho-L-serine + H(+) = a 1,2-diacyl-sn-glycero-3-phosphoethanolamine + CO2. Its pathway is phospholipid metabolism; phosphatidylethanolamine biosynthesis; phosphatidylethanolamine from CDP-diacylglycerol: step 2/2. Its function is as follows. Catalyzes the formation of phosphatidylethanolamine (PtdEtn) from phosphatidylserine (PtdSer). This chain is Phosphatidylserine decarboxylase proenzyme, found in Azorhizobium caulinodans (strain ATCC 43989 / DSM 5975 / JCM 20966 / LMG 6465 / NBRC 14845 / NCIMB 13405 / ORS 571).